Here is a 267-residue protein sequence, read N- to C-terminus: Neutrophil elastase (267 aa).

An N-terminal signal peptide occupies residues 1–27 (MTLGRRLACLFLACVLPALLLGGTALA). Residues 28–29 (SE) constitute a propeptide that is removed on maturation. Residues 30–247 (IVGGRRARPH…FVNWIDSIIQ (218 aa)) form the Peptidase S1 domain. C55 and C71 form a disulfide bridge. H70 serves as the catalytic Charge relay system. An N-linked (GlcNAc...) asparagine glycan is attached at N88. Residue D117 is the Charge relay system of the active site. N-linked (GlcNAc...) asparagine glycosylation is found at N124 and N173. Cystine bridges form between C151/C208, C181/C187, and C198/C223. The active-site Charge relay system is S202.

It belongs to the peptidase S1 family. Elastase subfamily. In terms of assembly, interacts with NOTCH2NL. Interacts with agaphelin, an antihemostatic protein from Anopheles gambiae. Bone marrow cells. Neutrophil.

The protein resides in the cytoplasmic vesicle. Its subcellular location is the phagosome. It catalyses the reaction Hydrolysis of proteins, including elastin. Preferential cleavage: Val-|-Xaa &gt; Ala-|-Xaa.. Its function is as follows. Serine protease that modifies the functions of natural killer cells, monocytes and granulocytes. Inhibits C5a-dependent neutrophil enzyme release and chemotaxis. Promotes cleavage of GSDMB, thereby inhibiting pyroptosis. Promotes blood coagulation. Through the activation of the platelet fibrinogen receptor integrin alpha-IIb/beta-3, potentiates platelet aggregation induced by a threshold concentration of cathepsin G (CTSG). Cleaves and thus inactivates tissue factor pathway inhibitor (TFPI). Capable of killing E.coli but not S.aureus in vitro; digests outer membrane protein A (ompA) in E.coli and K.pneumoniae. The protein is Neutrophil elastase (ELANE) of Homo sapiens (Human).